The primary structure comprises 433 residues: TDIGGGLDVGGGLRGGLDIDAKGPDVDIKGPKVGGDISGPDLDVSGPDLDIDGGGKKGKGGFGFGLKMPKFGFGGHGKGDIDVDADVDIERPDLDVSGDADLPSGGVGLDVGGGIGGGLGGGLDIDANGPDVDIKGPKVGGDISGPDLDVSGPDLDIDVDGKKKGKGGFGFGMKMPKFGFGGHGKGDIDVDADVDIERPDLDVSGDADLPSGGVGLDVGGGIGGGLGGGLDIDANGPDVDIKGPKVGGDISGPDLDVSGPDLDIDVDGKKKGKGGFGFGLKIPKFMDPTFGFGGHGKGDIDVDADGGVVIPEGDIKVKTGKPDIGGDVDLPSGGVDLDVGGGIGGGLGGGLDIDAKGPDVDIKGPRVGGDISGPDLDVSGPDLDIDGDGKKKGKGGFGFGLKMPKFGFGGHGKGDIDVDADVDIERPDLNVSG.

2 tandem repeats follow at residues 112–122 and 219–229. A 3 X 11 AA repeats of G-G-G-I-G-G-G-L-G-G-G region spans residues 112–350; that stretch reads GGGIGGGLGG…GGIGGGLGGG (239 aa). A Nuclear localization signal motif is present at residues 266–274; the sequence is VDGKKKGKG. Copy 3 of the repeat occupies 340 to 350; it reads GGGIGGGLGGG. 2 disordered regions span residues 366–389 and 411–433; these read RVGG…DGDG and HGKG…NVSG. Positions 423–433 are enriched in basic and acidic residues; that stretch reads DIERPDLNVSG.

Egg cortex.

It localises to the microsome membrane. The protein localises to the nucleus. It is found in the endoplasmic reticulum membrane. May function as a multidomain RNA-binding protein. May play a role in nuclear RNA processing and in early development. This is Vesicle-associated protein (VAP-1) from Strongylocentrotus purpuratus (Purple sea urchin).